The following is a 306-amino-acid chain: Transcription initiation factor IIB (306 aa).

A run of 2 repeats spans residues asparagine 122–leucine 205 and aspartate 216–glutamine 297.

The protein belongs to the TFIIB family.

Its function is as follows. Stabilizes TBP binding to an archaeal box-A promoter. Also responsible for recruiting RNA polymerase II to the pre-initiation complex (DNA-TBP-TFIIB). This chain is Transcription initiation factor IIB, found in Saccharolobus shibatae (strain ATCC 51178 / DSM 5389 / JCM 8931 / NBRC 15437 / B12) (Sulfolobus shibatae).